We begin with the raw amino-acid sequence, 500 residues long: NAD(P)H-quinone oxidoreductase chain 4, chloroplastic (500 aa).

14 helical membrane-spanning segments follow: residues 4-24, 37-57, 84-104, 111-129, 134-154, 167-187, 208-228, 242-262, 272-292, 305-325, 330-350, 374-396, 416-436, and 462-482; these read FPWL…IFFF, ICIC…HFQL, GLSI…TLAA, SRLF…IGSF, LLLF…LLSM, FILY…GMGL, ALEI…SPII, HYST…YGLV, AHSI…IYAA, IAYS…SITD, GAIL…FLAG, IFTM…GFVA, ILIT…SLSM, and LFVS…PDFV.

It belongs to the complex I subunit 4 family.

It is found in the plastid. It localises to the chloroplast thylakoid membrane. It carries out the reaction a plastoquinone + NADH + (n+1) H(+)(in) = a plastoquinol + NAD(+) + n H(+)(out). It catalyses the reaction a plastoquinone + NADPH + (n+1) H(+)(in) = a plastoquinol + NADP(+) + n H(+)(out). The chain is NAD(P)H-quinone oxidoreductase chain 4, chloroplastic from Liriodendron tulipifera (Tuliptree).